The primary structure comprises 323 residues: Tetraacyldisaccharide 4'-kinase (323 aa).

56–63 contributes to the ATP binding site; the sequence is TVGGVGKT.

It belongs to the LpxK family.

The enzyme catalyses a lipid A disaccharide + ATP = a lipid IVA + ADP + H(+). The protein operates within glycolipid biosynthesis; lipid IV(A) biosynthesis; lipid IV(A) from (3R)-3-hydroxytetradecanoyl-[acyl-carrier-protein] and UDP-N-acetyl-alpha-D-glucosamine: step 6/6. Functionally, transfers the gamma-phosphate of ATP to the 4'-position of a tetraacyldisaccharide 1-phosphate intermediate (termed DS-1-P) to form tetraacyldisaccharide 1,4'-bis-phosphate (lipid IVA). The protein is Tetraacyldisaccharide 4'-kinase of Legionella pneumophila (strain Corby).